A 222-amino-acid polypeptide reads, in one-letter code: Riboflavin kinase (222 aa).

The tract at residues methionine 1–glycine 92 is unknown. A riboflavin kinase region spans residues tyrosine 93–aspartate 222. Residue glycine 102 to arginine 107 participates in CDP binding. Mg(2+) is bound by residues threonine 131 and asparagine 133. Residues threonine 188 and glutamate 196 each coordinate FMN. CDP is bound at residue cysteine 201–arginine 204.

It belongs to the archaeal riboflavin kinase family. Mg(2+) serves as cofactor.

It carries out the reaction riboflavin + CTP = CDP + FMN + H(+). Its pathway is cofactor biosynthesis; FMN biosynthesis; FMN from riboflavin (CTP route): step 1/1. Catalyzes the CTP-dependent phosphorylation of riboflavin (vitamin B2) to form flavin mononucleotide (FMN). The sequence is that of Riboflavin kinase (ribK) from Methanoculleus marisnigri (strain ATCC 35101 / DSM 1498 / JR1).